The primary structure comprises 950 residues: Protocadherin alpha-8 (950 aa).

Positions 1–29 are cleaved as a signal peptide; sequence MVYHWRGDLGSWRLLLLLLLLAAWKVGSG. 6 Cadherin domains span residues 30 to 133, 157 to 242, 243 to 350, 351 to 455, 456 to 565, and 581 to 678; these read QLHY…PPVF, ASDA…APNF, EQSE…VPEI, ALTS…APAF, AQPE…APAL, and VPRS…APKA. The Extracellular segment spans residues 30–697; the sequence is QLHYSVPEEA…GPEAALVDVN (668 aa). N-linked (GlcNAc...) asparagine glycans are attached at residues N257 and N265. N-linked (GlcNAc...) asparagine glycosylation is present at N548. Residues 698–718 traverse the membrane as a helical segment; that stretch reads VYLIIAICAVSSLLVLTLLLY. Residues 719–950 are Cytoplasmic-facing; the sequence is TALRCSALPT…GNSTTDNSDQ (232 aa). PXXP repeat units follow at residues 774 to 777, 799 to 802, 832 to 835, 873 to 876, and 891 to 894; these read PCLP, PRQP, PGGP, PGNP, and PGSP. The 5 X 4 AA repeats of P-X-X-P stretch occupies residues 774-894; the sequence is PCLPPDLGSV…PDKFIIPGSP (121 aa). Residues 831–950 form a disordered region; the sequence is GPGGPDQQWP…GNSTTDNSDQ (120 aa). The segment covering 909–923 has biased composition (basic and acidic residues); sequence DKSDFITFGKKEETK.

The protein localises to the cell membrane. Potential calcium-dependent cell-adhesion protein. May be involved in the establishment and maintenance of specific neuronal connections in the brain. The protein is Protocadherin alpha-8 (PCDHA8) of Pan troglodytes (Chimpanzee).